A 348-amino-acid chain; its full sequence is GMP reductase (348 aa).

108–131 is an NADP(+) binding site; the sequence is ADFQKTKDVMALSDELIFICIDIA. Residues Gly181 and Gly183 each contribute to the K(+) site. Residue Cys186 is the Thioimidate intermediate of the active site. Position 216–239 (216–239) interacts with NADP(+); it reads IIGDGGCACAGDVAKAFGGGADFV.

The protein belongs to the IMPDH/GMPR family. GuaC type 1 subfamily. As to quaternary structure, homotetramer.

The enzyme catalyses IMP + NH4(+) + NADP(+) = GMP + NADPH + 2 H(+). Functionally, catalyzes the irreversible NADPH-dependent deamination of GMP to IMP. It functions in the conversion of nucleobase, nucleoside and nucleotide derivatives of G to A nucleotides, and in maintaining the intracellular balance of A and G nucleotides. In Vibrio vulnificus (strain CMCP6), this protein is GMP reductase.